The sequence spans 865 residues: Leucine-rich repeat-containing protein 66 (865 aa).

Residues 4–24 (FYARVTVMVTGLCFVGTVTNP) traverse the membrane as a helical segment. The N-linked (GlcNAc...) asparagine glycan is linked to asparagine 42. LRR repeat units follow at residues 138-160 (RLKVLLLQRNQLGPTPKGLWKLK), 161-182 (PLCSLDLSFNRRVGIGLSGFHG), 185-206 (QLKSIYLKNNKILTIHPEAFKG), 209-230 (KLQVVDLRSSALTMLVPIVTIA), and 235-255 (NLELGLADNQWQCNESDANFQ). Asparagine 248 is a glycosylation site (N-linked (GlcNAc...) asparagine). Residues 366 to 386 (ALAVCLSVFITFVVAFCLGAF) form a helical membrane-spanning segment. Disordered regions lie at residues 463–522 (RMLG…PGQH) and 654–749 (DTPS…AESV). Residues 470 to 479 (MDPSSQQSPG) are compositionally biased toward polar residues. Over residues 675–688 (AVQRDASFDPHDDL) the composition is skewed to basic and acidic residues. The segment covering 702 to 713 (FTLSSEGSQDTR) has biased composition (polar residues). Residues serine 714 and serine 748 each carry the phosphoserine modification. The region spanning 728 to 759 (SQPLPSRNLGEYKDSVTSAESVEDITSQQTLE) is the LRRNT domain. A glycan (N-linked (GlcNAc...) asparagine) is linked at asparagine 787. Residues 840–865 (FPNIDSSPSPPCSDQDPSDPEEHDTK) are disordered. Residues 855 to 865 (DPSDPEEHDTK) are compositionally biased toward acidic residues.

It localises to the membrane. The sequence is that of Leucine-rich repeat-containing protein 66 (Lrrc66) from Rattus norvegicus (Rat).